Reading from the N-terminus, the 367-residue chain is Transcription factor aptf-2 (367 aa).

Positions Val29–Val49 are disordered. The segment covering Gly36–Pro47 has biased composition (polar residues). The tract at residues Ala220–Thr354 is H-S-H (helix-span-helix), dimerization.

This sequence belongs to the AP-2 family. As to quaternary structure, binds DNA as a dimer.

The protein localises to the nucleus. It is found in the cytoplasm. Its function is as follows. Sequence-specific DNA-binding protein that interacts with enhancer elements to regulate transcription of selected genes. Required for neuroblast and epidermal morphogenesis, perhaps acting in cooperation with transcription factor aptf-4. The chain is Transcription factor aptf-2 from Caenorhabditis elegans.